Reading from the N-terminus, the 758-residue chain is Polyribonucleotide nucleotidyltransferase (758 aa).

Residues D482 and D488 each contribute to the Mg(2+) site. In terms of domain architecture, KH spans 549–608; sequence PRVLSFYIDKDKISAAIGTKGKNIRSVCERSNAKIEIGDDGKVSVFAISSTEAEAAKNMM. The region spanning 618-686 is the S1 motif domain; the sequence is GSIIDAKVVK…KGGCPKLSRR (69 aa). Residues 707 to 758 are disordered; that stretch reads DGLNNRDNYYNNSFNKKPEDNYHSNRPTRPRSGFSNRSRPKFGNNDSSSGFY. The segment covering 711 to 721 has biased composition (low complexity); that stretch reads NRDNYYNNSFN.

It belongs to the polyribonucleotide nucleotidyltransferase family. Mg(2+) is required as a cofactor.

It localises to the cytoplasm. It catalyses the reaction RNA(n+1) + phosphate = RNA(n) + a ribonucleoside 5'-diphosphate. In terms of biological role, involved in mRNA degradation. Catalyzes the phosphorolysis of single-stranded polyribonucleotides processively in the 3'- to 5'-direction. The protein is Polyribonucleotide nucleotidyltransferase of Wolbachia pipientis subsp. Culex pipiens (strain wPip).